Here is a 497-residue protein sequence, read N- to C-terminus: MIGSLHEIIRLDASTLAAKIVAKELSSVEITQACLDQIEATDDTYRAFLHVAAEKALSAAAAVDKAVAAGGQLSSTLAGVPLALKDVFTTVDMPTTCGSKILQGWHSPYDATVTTRLRAAGIPILGKTNMDEFAMGSSTENSAYGPTRNPWNVDRVPGGSGGGSAAALAAFQAPLAIGSDTGGSIRQPAALTATVGVKPTYGTVSRYGLVACASSLDQGGPCARTVLDTALLHAVIAGHDARDSTSVEAAVPDIVGAAKAGESGDLHGVRVGVVRQLRGEGYQSGVLASFQAAVEQLIALGATVSEVDCPHFDYALAAYYLILPSEVSSNLARFDAMRYGLRVGDDGSRSAEEVIALTRAAGFGPEVKRRIMIGAYALSAGYYDSYYSQAQKVRTLIARDLDKAYRSVDVLVSPATPTTAFSLGEKADDPLAMYLFDLCTLPLNLAGHCGMSVPSGLSSDDDLPVGLQIMAPALADDRLYRVGAAYEAARGPLPSAI.

Catalysis depends on charge relay system residues Lys-85 and Ser-160. Ser-184 serves as the catalytic Acyl-ester intermediate.

The protein belongs to the amidase family. GatA subfamily. As to quaternary structure, heterotrimer of A, B and C subunits.

It carries out the reaction L-glutamyl-tRNA(Gln) + L-glutamine + ATP + H2O = L-glutaminyl-tRNA(Gln) + L-glutamate + ADP + phosphate + H(+). Its function is as follows. Allows the formation of correctly charged Gln-tRNA(Gln) through the transamidation of misacylated Glu-tRNA(Gln) in organisms which lack glutaminyl-tRNA synthetase. The reaction takes place in the presence of glutamine and ATP through an activated gamma-phospho-Glu-tRNA(Gln). This is Glutamyl-tRNA(Gln) amidotransferase subunit A (gatA) from Mycobacterium leprae (strain TN).